Reading from the N-terminus, the 255-residue chain is Aliphatic sulfonates import ATP-binding protein SsuB (255 aa).

Positions 7–231 (IKEKAFVQEG…PRNRTTPDFQ (225 aa)) constitute an ABC transporter domain. Position 39–46 (39–46 (GPSGCGKS)) interacts with ATP.

The protein belongs to the ABC transporter superfamily. Aliphatic sulfonates importer (TC 3.A.1.17.2) family. The complex is composed of two ATP-binding proteins (SsuB), two transmembrane proteins (SsuC) and a solute-binding protein (SsuA).

The protein localises to the cell membrane. It carries out the reaction ATP + H2O + aliphatic sulfonate-[sulfonate-binding protein]Side 1 = ADP + phosphate + aliphatic sulfonateSide 2 + [sulfonate-binding protein]Side 1.. In terms of biological role, part of the ABC transporter complex SsuABC involved in aliphatic sulfonates import. Responsible for energy coupling to the transport system. Is also involved in taurine transport. This Bacillus subtilis (strain 168) protein is Aliphatic sulfonates import ATP-binding protein SsuB.